A 367-amino-acid chain; its full sequence is Methylthioribose-1-phosphate isomerase (367 aa).

Catalysis depends on aspartate 250, which acts as the Proton donor.

It belongs to the eIF-2B alpha/beta/delta subunits family. MtnA subfamily.

It is found in the cytoplasm. The protein localises to the nucleus. It catalyses the reaction 5-(methylsulfanyl)-alpha-D-ribose 1-phosphate = 5-(methylsulfanyl)-D-ribulose 1-phosphate. It functions in the pathway amino-acid biosynthesis; L-methionine biosynthesis via salvage pathway; L-methionine from S-methyl-5-thio-alpha-D-ribose 1-phosphate: step 1/6. In terms of biological role, catalyzes the interconversion of methylthioribose-1-phosphate (MTR-1-P) into methylthioribulose-1-phosphate (MTRu-1-P). The polypeptide is Methylthioribose-1-phosphate isomerase (IDI2) (Hordeum vulgare (Barley)).